A 532-amino-acid chain; its full sequence is Monolignol oxidoreductase AtBBE-like 15 (532 aa).

Positions 1-27 are cleaved as a signal peptide; the sequence is MAFAISKRNATLFLVTLLLISVPLSSS. C36 and C100 are oxidised to a cystine. N57 is a glycosylation site (N-linked (GlcNAc...) asparagine). The FAD-binding PCMH-type domain maps to 76–254; the sequence is TPSNPKPVFI…LAWKIKLVPV (179 aa). A cross-link (6-(S-cysteinyl)-8alpha-(pros-histidyl)-FAD (His-Cys)) is located at residues 115–179; it reads HDYEGLSFVA…QTHGFPAGLC (65 aa). 2 N-linked (GlcNAc...) asparagine glycosylation sites follow: N306 and N431.

It belongs to the oxygen-dependent FAD-linked oxidoreductase family. It depends on FAD as a cofactor. The FAD cofactor is bound via a bicovalent 6-S-cysteinyl, 8alpha-N1-histidyl FAD linkage. In terms of tissue distribution, expressed in sepals and stamen.

The protein localises to the secreted. Its subcellular location is the cell wall. The catalysed reaction is (E)-4-coumaroyl alcohol + A = (E)-4-coumaraldehyde + AH2. The enzyme catalyses (E)-coniferol + A = (E)-coniferaldehyde + AH2. It carries out the reaction (E)-sinapyl alcohol + A = (E)-sinapaldehyde + AH2. It catalyses the reaction 4-O-(beta-D-glucosyl)-(E)-coniferol + A = 4-O-(beta-D-glucosyl)-4-(E)-coniferyl aldehyde + AH2. Functionally, required for endosperm development and polar nuclei fusion. Mediates oxidation of p-hydroxylated derivatives of cinnamyl alcohol (i.e. the monolignols p-coumaryl-, coniferyl-, and sinapyl alcohol) to their corresponding aldehydes. Can also use the beta-O-glycosylated form of coniferyl alcohol (coniferin) as substrate, but is much less efficient towards cinnamyl alcohol. The electron acceptor required for these reactions is not known, but does not seem to be dioxygen. The polypeptide is Monolignol oxidoreductase AtBBE-like 15 (Arabidopsis thaliana (Mouse-ear cress)).